The following is a 104-amino-acid chain: uncharacterized protein (104 aa).

This is an uncharacterized protein from Archaeoglobus fulgidus (strain ATCC 49558 / DSM 4304 / JCM 9628 / NBRC 100126 / VC-16).